A 163-amino-acid chain; its full sequence is Epithelial membrane protein 3 (163 aa).

The helical transmembrane segment at 4 to 24 threads the bilayer; it reads LLLVVSALHILILILLFVATL. N-linked (GlcNAc...) asparagine glycans are attached at residues Asn49 and Asn56. 3 helical membrane passes run 66–86, 100–120, and 139–159; these read VQVL…LFMF, TGFC…IYAI, and FALA…YIHL.

It belongs to the PMP-22/EMP/MP20 family.

It localises to the membrane. Probably involved in cell proliferation and cell-cell interactions. The sequence is that of Epithelial membrane protein 3 (EMP3) from Bos taurus (Bovine).